A 178-amino-acid polypeptide reads, in one-letter code: Ribosome maturation factor RimM (178 aa).

A PRC barrel domain is found at 101-178 (ADEYYWYQLV…VMRVEWDADF (78 aa)).

It belongs to the RimM family. As to quaternary structure, binds ribosomal protein uS19.

The protein localises to the cytoplasm. An accessory protein needed during the final step in the assembly of 30S ribosomal subunit, possibly for assembly of the head region. Essential for efficient processing of 16S rRNA. May be needed both before and after RbfA during the maturation of 16S rRNA. It has affinity for free ribosomal 30S subunits but not for 70S ribosomes. This Pseudomonas putida (strain ATCC 47054 / DSM 6125 / CFBP 8728 / NCIMB 11950 / KT2440) protein is Ribosome maturation factor RimM.